The sequence spans 213 residues: Transcription antitermination protein NusB (213 aa).

It belongs to the NusB family.

Its function is as follows. Involved in transcription antitermination. Required for transcription of ribosomal RNA (rRNA) genes. Binds specifically to the boxA antiterminator sequence of the ribosomal RNA (rrn) operons. This Synechococcus elongatus (strain ATCC 33912 / PCC 7942 / FACHB-805) (Anacystis nidulans R2) protein is Transcription antitermination protein NusB.